Consider the following 123-residue polypeptide: Large ribosomal subunit protein uL14 (123 aa).

It belongs to the universal ribosomal protein uL14 family. Part of the 50S ribosomal subunit. Forms a cluster with proteins L3 and L19. In the 70S ribosome, L14 and L19 interact and together make contacts with the 16S rRNA in bridges B5 and B8.

Functionally, binds to 23S rRNA. Forms part of two intersubunit bridges in the 70S ribosome. This is Large ribosomal subunit protein uL14 from Photobacterium profundum (strain SS9).